We begin with the raw amino-acid sequence, 72 residues long: DNA gyrase inhibitor YacG (72 aa).

Zn(2+) contacts are provided by C17, C20, C32, and C36. The tract at residues 51–72 is disordered; that stretch reads IPGPEEEEMSYPPRSDDENRSR.

Belongs to the DNA gyrase inhibitor YacG family. In terms of assembly, interacts with GyrB. It depends on Zn(2+) as a cofactor.

Functionally, inhibits all the catalytic activities of DNA gyrase by preventing its interaction with DNA. Acts by binding directly to the C-terminal domain of GyrB, which probably disrupts DNA binding by the gyrase. This Methylorubrum extorquens (strain PA1) (Methylobacterium extorquens) protein is DNA gyrase inhibitor YacG.